The chain runs to 241 residues: MATVSMRDMLKAGVHFGHQTRYWNPKMKPFIFGARNKVHIINLEKTVPMFNEALAELNKIASRKGKILFVGTKRAASEAVKDAALSCDQFFVNHRWLGGMLTNWKTVRQSIKRLKDLETQSQDGTFDKLTKKEALMRTRELEKLENSLGGIKDMGGLPDALFVIDADHEHIAIKEANNLGIPVFAIVDTNSDPDGVDFVIPGNDDAIRAVTLYLGAVAATVREGRSQDLASQAEESFVEAE.

It belongs to the universal ribosomal protein uS2 family.

The protein is Small ribosomal subunit protein uS2 of Escherichia coli O127:H6 (strain E2348/69 / EPEC).